Here is a 328-residue protein sequence, read N- to C-terminus: MKALVRVAVTGAAGQIGYSLLFRIAAGEMFGKDRSVILQMLELPDEKAQAALKGVMMELEDCAFPLLAGMVVTDNPDIAFKDADAALLVGSRPRGPGMERKDLLMENAKIFTAQGAALNKVARRDVKVLVVGNPANTNAYIAMKSAPDLNPKHFTAMLRLDHNRALSQLSTKLSKPVANIEKLIVWGNHSPTMYPDYRFATADGTPIIEAINDQAWNANSFIPTVSKRGAAIIEARGLSSAASAANAAIDHMRDWLLGSNGKWITMGVPSDGSYGIPEGMIFGFPVTTTNGEYSIVKDLPIDTFSKTYIDKTLAELEEERASIAHLLR.

11–17 (GAAGQIG) serves as a coordination point for NAD(+). Residues Arg94 and Arg100 each contribute to the substrate site. Residues Asn107, Gln114, and 131–133 (VGN) contribute to the NAD(+) site. Positions 133 and 164 each coordinate substrate. Residue His189 is the Proton acceptor of the active site.

It belongs to the LDH/MDH superfamily. MDH type 2 family.

It carries out the reaction (S)-malate + NAD(+) = oxaloacetate + NADH + H(+). Its function is as follows. Catalyzes the reversible oxidation of malate to oxaloacetate. The sequence is that of Malate dehydrogenase from Xylella fastidiosa (strain M12).